The sequence spans 85 residues: uncharacterized protein (85 aa).

Disordered regions lie at residues 1–28 (MPQK…LRKA) and 35–54 (SKKK…SLTE). The segment covering 35–48 (SKKKSLQHLKKLKK) has biased composition (basic residues).

The protein localises to the nucleus. This is an uncharacterized protein from Saccharomyces cerevisiae (strain ATCC 204508 / S288c) (Baker's yeast).